Reading from the N-terminus, the 441-residue chain is Chromatin structure-remodeling complex subunit SFH1 (441 aa).

Over residues 124 to 137 (DFDANDFEDDDDDD) the composition is skewed to acidic residues. Disordered regions lie at residues 124–183 (DFDA…AAPP) and 383–407 (EMTP…KRES). Composition is skewed to basic and acidic residues over residues 138-147 (QSQRESRDGS) and 155-166 (DGTKKEEQDKFA).

The protein belongs to the SNF5 family.

It is found in the nucleus. Its function is as follows. Part of the chromatin structure-remodeling complex (RSC) which is involved in transcription regulation and nucleosome positioning. RSC is responsible for the transfer of a histone octamer from a nucleosome core particle to naked DNA. The reaction requires ATP and involves an activated RSC-nucleosome intermediate. Remodeling reaction also involves DNA translocation, DNA twist and conformational change. As a reconfigurer of centromeric and flanking nucleosomes, RSC complex is required both for proper kinetochore function in chromosome segregation and, via a PKC1-dependent signaling pathway, for organization of the cellular cytoskeleton. This subunit is essential for mitotic growth and required for cell cycle progression. This chain is Chromatin structure-remodeling complex subunit SFH1 (SFH1), found in Yarrowia lipolytica (strain CLIB 122 / E 150) (Yeast).